Consider the following 268-residue polypeptide: Small ribosomal subunit protein eS1 (268 aa).

Residues 1-21 form a disordered region; that stretch reads MAVGKNKGLSKGGKKGGKKKV.

Belongs to the eukaryotic ribosomal protein eS1 family. Component of the small ribosomal subunit. Mature ribosomes consist of a small (40S) and a large (60S) subunit. The 40S subunit contains about 33 different proteins and 1 molecule of RNA (18S). The 60S subunit contains about 49 different proteins and 3 molecules of RNA (28S, 5.8S and 5S).

The protein localises to the cytoplasm. Essential for oogenesis; required for late follicle cell development. This Drosophila sechellia (Fruit fly) protein is Small ribosomal subunit protein eS1.